A 409-amino-acid polypeptide reads, in one-letter code: 8-amino-7-oxononanoate synthase (409 aa).

Substrate is bound at residue R20. 116–117 (GY) is a pyridoxal 5'-phosphate binding site. Position 141 (H141) interacts with substrate. Pyridoxal 5'-phosphate contacts are provided by S187, H215, and T243. Residue K246 is modified to N6-(pyridoxal phosphate)lysine. Residue T369 participates in substrate binding.

It belongs to the class-II pyridoxal-phosphate-dependent aminotransferase family. BioF subfamily. In terms of assembly, homodimer. Pyridoxal 5'-phosphate serves as cofactor.

It carries out the reaction 6-carboxyhexanoyl-[ACP] + L-alanine + H(+) = (8S)-8-amino-7-oxononanoate + holo-[ACP] + CO2. It functions in the pathway cofactor biosynthesis; biotin biosynthesis. In terms of biological role, catalyzes the decarboxylative condensation of pimeloyl-[acyl-carrier protein] and L-alanine to produce 8-amino-7-oxononanoate (AON), [acyl-carrier protein], and carbon dioxide. The polypeptide is 8-amino-7-oxononanoate synthase (Polaromonas naphthalenivorans (strain CJ2)).